A 53-amino-acid polypeptide reads, in one-letter code: Large ribosomal subunit protein eL40 (53 aa).

Belongs to the eukaryotic ribosomal protein eL40 family.

This is Large ribosomal subunit protein eL40 from Pyrobaculum islandicum (strain DSM 4184 / JCM 9189 / GEO3).